Reading from the N-terminus, the 191-residue chain is 2-amino-4-hydroxy-6-hydroxymethyldihydropteridine pyrophosphokinase (191 aa).

This sequence belongs to the HPPK family.

It carries out the reaction 6-hydroxymethyl-7,8-dihydropterin + ATP = (7,8-dihydropterin-6-yl)methyl diphosphate + AMP + H(+). Its pathway is cofactor biosynthesis; tetrahydrofolate biosynthesis; 2-amino-4-hydroxy-6-hydroxymethyl-7,8-dihydropteridine diphosphate from 7,8-dihydroneopterin triphosphate: step 4/4. Functionally, catalyzes the transfer of pyrophosphate from adenosine triphosphate (ATP) to 6-hydroxymethyl-7,8-dihydropterin, an enzymatic step in folate biosynthesis pathway. The polypeptide is 2-amino-4-hydroxy-6-hydroxymethyldihydropteridine pyrophosphokinase (folK) (Mycobacterium leprae (strain TN)).